We begin with the raw amino-acid sequence, 530 residues long: BTB/POZ domain-containing protein 3 (530 aa).

Positions 23–48 (KNRSKKGSKKANSSGGGGGGGSVGSG) are disordered. Gly residues predominate over residues 36–46 (SGGGGGGGSVG). The BTB domain maps to 128-198 (ADVHFVVGPP…IYCDEIDLAA (71 aa)). The region spanning 243–308 (FEEPDLTQRC…NWAEVECQRQ (66 aa)) is the BACK domain.

In terms of tissue distribution, in the somatosensory cortex, specifically expressed in spiny stellate neurons during barrel formation. Also expressed in the olfactory bulb, piriform cortex and hippocampus.

It is found in the cytoplasm. The protein resides in the cytosol. Its subcellular location is the nucleus. Acts as a key regulator of dendritic field orientation during development of sensory cortex. Also directs dendrites toward active axon terminals when ectopically expressed. The chain is BTB/POZ domain-containing protein 3 (Btbd3) from Mus musculus (Mouse).